The primary structure comprises 253 residues: Ubiquinone/menaquinone biosynthesis C-methyltransferase UbiE (253 aa).

S-adenosyl-L-methionine-binding positions include Thr-76, Asp-97, 125–126 (NA), and Ser-142.

Belongs to the class I-like SAM-binding methyltransferase superfamily. MenG/UbiE family.

The enzyme catalyses a 2-demethylmenaquinol + S-adenosyl-L-methionine = a menaquinol + S-adenosyl-L-homocysteine + H(+). It carries out the reaction a 2-methoxy-6-(all-trans-polyprenyl)benzene-1,4-diol + S-adenosyl-L-methionine = a 5-methoxy-2-methyl-3-(all-trans-polyprenyl)benzene-1,4-diol + S-adenosyl-L-homocysteine + H(+). It functions in the pathway quinol/quinone metabolism; menaquinone biosynthesis; menaquinol from 1,4-dihydroxy-2-naphthoate: step 2/2. Its pathway is cofactor biosynthesis; ubiquinone biosynthesis. Methyltransferase required for the conversion of demethylmenaquinol (DMKH2) to menaquinol (MKH2) and the conversion of 2-polyprenyl-6-methoxy-1,4-benzoquinol (DDMQH2) to 2-polyprenyl-3-methyl-6-methoxy-1,4-benzoquinol (DMQH2). The sequence is that of Ubiquinone/menaquinone biosynthesis C-methyltransferase UbiE from Xanthomonas axonopodis pv. citri (strain 306).